The chain runs to 253 residues: Exosome complex component Rrp4 (253 aa).

The S1 motif domain maps to 80–153; sequence GDIVIGIVVD…SRGPILTVQD (74 aa).

Belongs to the RRP4 family. In terms of assembly, component of the archaeal exosome complex. Forms a trimer of Rrp4 and/or Csl4 subunits. The trimer associates with a hexameric ring-like arrangement composed of 3 Rrp41-Rrp42 heterodimers.

The protein localises to the cytoplasm. Functionally, non-catalytic component of the exosome, which is a complex involved in RNA degradation. Increases the RNA binding and the efficiency of RNA degradation. Confers strong poly(A) specificity to the exosome. The chain is Exosome complex component Rrp4 from Ignisphaera aggregans (strain DSM 17230 / JCM 13409 / AQ1.S1).